We begin with the raw amino-acid sequence, 340 residues long: Fructose-1,6-bisphosphatase class 1 (340 aa).

Residues Glu107, Asp126, Leu128, and Asp129 each coordinate Mg(2+). Asn215 provides a ligand contact to substrate. Glu287 contacts Mg(2+).

This sequence belongs to the FBPase class 1 family. As to quaternary structure, homotetramer. Mg(2+) is required as a cofactor.

The protein resides in the cytoplasm. The enzyme catalyses beta-D-fructose 1,6-bisphosphate + H2O = beta-D-fructose 6-phosphate + phosphate. Its pathway is carbohydrate biosynthesis; gluconeogenesis. This chain is Fructose-1,6-bisphosphatase class 1, found in Brucella canis (strain ATCC 23365 / NCTC 10854 / RM-666).